A 61-amino-acid chain; its full sequence is Sperm protamine P1 (61 aa).

The interval methionine 1–arginine 61 is disordered.

The protein belongs to the protamine P1 family. In terms of tissue distribution, testis.

It is found in the nucleus. The protein resides in the chromosome. Functionally, protamines substitute for histones in the chromatin of sperm during the haploid phase of spermatogenesis. They compact sperm DNA into a highly condensed, stable and inactive complex. The polypeptide is Sperm protamine P1 (PRM1) (Dasyurus hallucatus (Northern quoll)).